A 103-amino-acid polypeptide reads, in one-letter code: Large ribosomal subunit protein uL23 (103 aa).

Belongs to the universal ribosomal protein uL23 family. Part of the 50S ribosomal subunit. Contacts protein L29, and trigger factor when it is bound to the ribosome.

Its function is as follows. One of the early assembly proteins it binds 23S rRNA. One of the proteins that surrounds the polypeptide exit tunnel on the outside of the ribosome. Forms the main docking site for trigger factor binding to the ribosome. The chain is Large ribosomal subunit protein uL23 from Chlorobium luteolum (strain DSM 273 / BCRC 81028 / 2530) (Pelodictyon luteolum).